The chain runs to 152 residues: Catabolic 3-dehydroquinase 1 (152 aa).

The Proton acceptor role is filled by Y24. Substrate contacts are provided by N75, H81, and D88. Catalysis depends on H101, which acts as the Proton donor. Substrate is bound by residues 102–103 (VS) and R112.

It belongs to the type-II 3-dehydroquinase family. In terms of assembly, homododecamer. Adopts a ring-like structure, composed of an arrangement of two hexameric rings stacked on top of one another.

The enzyme catalyses 3-dehydroquinate = 3-dehydroshikimate + H2O. Its pathway is aromatic compound metabolism; 3,4-dihydroxybenzoate biosynthesis; 3,4-dihydroxybenzoate from 3-dehydroquinate: step 1/2. Its function is as follows. Is involved in the catabolism of quinate. Allows the utilization of quinate as carbon source via the beta-ketoadipate pathway. The polypeptide is Catabolic 3-dehydroquinase 1 (Aspergillus terreus (strain NIH 2624 / FGSC A1156)).